A 756-amino-acid chain; its full sequence is Catalase-peroxidase (756 aa).

Residues 1–26 (MKGKTVNKQTLAALVSALLVFNPAVA) form the signal peptide. The tryptophyl-tyrosyl-methioninium (Trp-Tyr) (with M-274) cross-link spans 126-248 (WHSAGTYRTL…LGATHMGLIY (123 aa)). The Proton acceptor role is filled by histidine 127. The tryptophyl-tyrosyl-methioninium (Tyr-Met) (with W-126) cross-link spans 248–274 (YVNPEGPKGVPDPLGSAKNIRTAFSRM). Residue histidine 289 participates in heme b binding.

Belongs to the peroxidase family. Peroxidase/catalase subfamily. In terms of assembly, homodimer or homotetramer. It depends on heme b as a cofactor. Post-translationally, formation of the three residue Trp-Tyr-Met cross-link is important for the catalase, but not the peroxidase activity of the enzyme.

It carries out the reaction H2O2 + AH2 = A + 2 H2O. The enzyme catalyses 2 H2O2 = O2 + 2 H2O. In terms of biological role, bifunctional enzyme with both catalase and broad-spectrum peroxidase activity. The polypeptide is Catalase-peroxidase (Shewanella loihica (strain ATCC BAA-1088 / PV-4)).